Here is a 212-residue protein sequence, read N- to C-terminus: uncharacterized protein (212 aa).

S-adenosyl-L-methionine contacts are provided by G53, E74, and D96.

The protein belongs to the methyltransferase superfamily. YrrT family.

Its function is as follows. Could be a S-adenosyl-L-methionine-dependent methyltransferase. This is an uncharacterized protein from Anoxybacillus flavithermus (strain DSM 21510 / WK1).